We begin with the raw amino-acid sequence, 200 residues long: Small ribosomal subunit protein uS4 (200 aa).

Positions 22–43 (TGKELERRPYAPGQHGPTQRKK) are disordered. One can recognise an S4 RNA-binding domain in the interval 92–170 (QRLDNIVYRL…VPEYVTFDAE (79 aa)).

Belongs to the universal ribosomal protein uS4 family. Part of the 30S ribosomal subunit. Contacts protein S5. The interaction surface between S4 and S5 is involved in control of translational fidelity.

One of the primary rRNA binding proteins, it binds directly to 16S rRNA where it nucleates assembly of the body of the 30S subunit. Its function is as follows. With S5 and S12 plays an important role in translational accuracy. This Listeria monocytogenes serotype 4a (strain HCC23) protein is Small ribosomal subunit protein uS4.